The primary structure comprises 316 residues: Beta-ketoacyl-[acyl-carrier-protein] synthase III (316 aa).

Active-site residues include C112 and H243. Positions 244–248 are ACP-binding; sequence QANLR. Residue N273 is part of the active site.

It belongs to the thiolase-like superfamily. FabH family. Homodimer.

Its subcellular location is the cytoplasm. The enzyme catalyses malonyl-[ACP] + acetyl-CoA + H(+) = 3-oxobutanoyl-[ACP] + CO2 + CoA. Its pathway is lipid metabolism; fatty acid biosynthesis. Catalyzes the condensation reaction of fatty acid synthesis by the addition to an acyl acceptor of two carbons from malonyl-ACP. Catalyzes the first condensation reaction which initiates fatty acid synthesis and may therefore play a role in governing the total rate of fatty acid production. Possesses both acetoacetyl-ACP synthase and acetyl transacylase activities. Its substrate specificity determines the biosynthesis of branched-chain and/or straight-chain of fatty acids. The chain is Beta-ketoacyl-[acyl-carrier-protein] synthase III from Yersinia pestis (strain Pestoides F).